The primary structure comprises 479 residues: Ribulose bisphosphate carboxylase large chain (479 aa).

Positions 1–2 are excised as a propeptide; it reads MS. Positions 123 and 173 each coordinate substrate. Residue K175 is the Proton acceptor of the active site. Residue K177 participates in substrate binding. Mg(2+) contacts are provided by K201, D203, and E204. K201 carries the post-translational modification N6-carboxylysine. S208 carries the phosphoserine modification. The Proton acceptor role is filled by H294. The substrate site is built by R295 and H327. T330 bears the Phosphothreonine mark. Position 379 (S379) interacts with substrate.

The protein belongs to the RuBisCO large chain family. Type I subfamily. Heterohexadecamer of 8 large chains and 8 small chains; disulfide-linked. The disulfide link is formed within the large subunit homodimers. The cofactor is Mg(2+). Post-translationally, the disulfide bond which can form in the large chain dimeric partners within the hexadecamer appears to be associated with oxidative stress and protein turnover.

It is found in the plastid. It localises to the chloroplast. It carries out the reaction 2 (2R)-3-phosphoglycerate + 2 H(+) = D-ribulose 1,5-bisphosphate + CO2 + H2O. It catalyses the reaction D-ribulose 1,5-bisphosphate + O2 = 2-phosphoglycolate + (2R)-3-phosphoglycerate + 2 H(+). Functionally, ruBisCO catalyzes two reactions: the carboxylation of D-ribulose 1,5-bisphosphate, the primary event in carbon dioxide fixation, as well as the oxidative fragmentation of the pentose substrate in the photorespiration process. Both reactions occur simultaneously and in competition at the same active site. The sequence is that of Ribulose bisphosphate carboxylase large chain from Draba nemorosa (Woodland whitlowgrass).